Here is a 455-residue protein sequence, read N- to C-terminus: MTRLFGTDGVRGVANVNLTAEQALSLASAAVELLGAPGRSAGPAQRPRPLVVVGRDTRPSGEFLEAAVVAGLAASGADVARIGVAPTPAVAHAVAASDATFGVMLSASHNPMPDNGIKVFAAGGLKLPDEVEDAIERRMAQPPGPRPVGADVGRIRDEPGLLDRYADHLLAALPVRLDNLRVVVDCAQGAASALAPRVLRAAGADVIALHADGDGAAINDGSGVTHLDSLRAAVVDQAADVGIAHDGDADRCLAVDAAGEIVDGDQILAICALALAERGELADDTVVVTVMSNLGFHHAMREAGITVVTTPVGDRYVVEAMRAGGYVLGGEQSGHVVFLDHATTGDGLLTALRLLGRVAETGQPLGELAKAMTRLPQVLVNVRGVDRTRVDTSPQLRAAVAAAEAELGDGGRVLLRPSGTEPLVRVMVEAETDAVARDTAQRLAAVVRAALPAPR.

S108 (phosphoserine intermediate) is an active-site residue. Positions 108, 246, 248, and 250 each coordinate Mg(2+). S108 carries the phosphoserine modification.

It belongs to the phosphohexose mutase family. It depends on Mg(2+) as a cofactor. Post-translationally, activated by phosphorylation.

The catalysed reaction is alpha-D-glucosamine 1-phosphate = D-glucosamine 6-phosphate. In terms of biological role, catalyzes the conversion of glucosamine-6-phosphate to glucosamine-1-phosphate. The polypeptide is Phosphoglucosamine mutase (Frankia alni (strain DSM 45986 / CECT 9034 / ACN14a)).